The sequence spans 321 residues: Gibberellin 2-beta-dioxygenase 4 (321 aa).

The 114-residue stretch at 156–269 (DSDSVLRVNH…RLSTAYFAGP (114 aa)) folds into the Fe2OG dioxygenase domain. Positions 193, 195, and 250 each coordinate Fe cation. R260 is a catalytic residue.

The protein belongs to the iron/ascorbate-dependent oxidoreductase family. GA2OX subfamily. Fe(2+) is required as a cofactor. In terms of tissue distribution, expressed at the base of the shoot apical meristem and developing leaf primordia.

It carries out the reaction gibberellin A1 + 2-oxoglutarate + O2 = gibberellin A8 + succinate + CO2. The protein operates within plant hormone biosynthesis; gibberellin biosynthesis. In terms of biological role, catalyzes the 2-beta-hydroxylation of several biologically active gibberellins, leading to the homeostatic regulation of their endogenous level. Catabolism of gibberellins (GAs) plays a central role in plant development. Converts GA9/GA20 to GA51/GA29 and GA4/GA1 to GA34/GA8. The sequence is that of Gibberellin 2-beta-dioxygenase 4 (GA2OX4) from Arabidopsis thaliana (Mouse-ear cress).